The primary structure comprises 41 residues: Large ribosomal subunit protein bL36 (41 aa).

The disordered stretch occupies residues 1 to 21 (MKIRNSLKSLRGRHRDNQLVR).

Belongs to the bacterial ribosomal protein bL36 family.

This chain is Large ribosomal subunit protein bL36, found in Methylobacterium sp. (strain 4-46).